We begin with the raw amino-acid sequence, 300 residues long: Telomere repeat-binding factor 1 (300 aa).

The HTH myb-type domain occupies 1–58 (MGAPKQKWTQEEESALKSGVIKHGPGKWRTILKDPEFSGVLYLRSNVDLKDKWRNMSV). The segment at residues 28-57 (WRTILKDPEFSGVLYLRSNVDLKDKWRNMS) is a DNA-binding region (H-T-H motif). Disordered regions lie at residues 93–119 (LQSDEENVDATSGLQVSSNPPPRRPNV) and 185–213 (NSTPLSSHRRKGLGVFGGKQRTSSLPSPK). The 69-residue stretch at 117–185 (PNVRLDSLIM…KVKRKYRIPN (69 aa)) folds into the H15 domain. Residues 241–290 (EAAAVAAQAVAEAEAAMAEAEEAAKEAEAAEAEAEAAQAFAEEASKTLKG) adopt a coiled-coil conformation.

It belongs to the histone H1/H5 family. SMH subfamily. In terms of assembly, forms a homodimer and heterodimers with TRB2 or TRB3. Interacts with POT1b, TRB2 and TRB3 through its H15 domain.

The protein localises to the nucleus. It localises to the nucleolus. It is found in the chromosome. Its function is as follows. Binds preferentially double-stranded telomeric repeats. The sequence is that of Telomere repeat-binding factor 1 (TRB1) from Arabidopsis thaliana (Mouse-ear cress).